Consider the following 375-residue polypeptide: Putative nuclease YhcG (375 aa).

In terms of assembly, interacts with DNA processing enzymes, including the restriction complex HsdMRS, the integrases IntF and IntS, and the recombinase PinE.

Its function is as follows. May be a nuclease involved in DNA recombination and repair. The polypeptide is Putative nuclease YhcG (yhcG) (Escherichia coli (strain K12)).